Here is a 285-residue protein sequence, read N- to C-terminus: 4-diphosphocytidyl-2-C-methyl-D-erythritol kinase (285 aa).

Residue lysine 10 is part of the active site. 93–103 (PIGGGLGGGSS) contacts ATP. The active site involves aspartate 135.

Belongs to the GHMP kinase family. IspE subfamily.

It carries out the reaction 4-CDP-2-C-methyl-D-erythritol + ATP = 4-CDP-2-C-methyl-D-erythritol 2-phosphate + ADP + H(+). Its pathway is isoprenoid biosynthesis; isopentenyl diphosphate biosynthesis via DXP pathway; isopentenyl diphosphate from 1-deoxy-D-xylulose 5-phosphate: step 3/6. Its function is as follows. Catalyzes the phosphorylation of the position 2 hydroxy group of 4-diphosphocytidyl-2C-methyl-D-erythritol. The sequence is that of 4-diphosphocytidyl-2-C-methyl-D-erythritol kinase from Ruthia magnifica subsp. Calyptogena magnifica.